A 685-amino-acid chain; its full sequence is UvrABC system protein B (685 aa).

Residues 30 to 188 form the Helicase ATP-binding domain; the sequence is DGVLRGDRWQ…QELVSLHYIR (159 aa). 43-50 contacts ATP; it reads GVTGSGKT. The short motif at 96–119 is the Beta-hairpin element; that stretch reads YYDFYQPEAYLPALDKYIAKDLRI. The 163-residue stretch at 435–597 folds into the Helicase C-terminal domain; sequence QIDDLLAEIR…ITPRSIRKSL (163 aa). The 36-residue stretch at 641 to 676 folds into the UVR domain; sequence YAMVAELRLEMNEAAIQMEYEKAAYLRDEIARLMHG.

Belongs to the UvrB family. In terms of assembly, forms a heterotetramer with UvrA during the search for lesions. Interacts with UvrC in an incision complex.

Its subcellular location is the cytoplasm. The UvrABC repair system catalyzes the recognition and processing of DNA lesions. A damage recognition complex composed of 2 UvrA and 2 UvrB subunits scans DNA for abnormalities. Upon binding of the UvrA(2)B(2) complex to a putative damaged site, the DNA wraps around one UvrB monomer. DNA wrap is dependent on ATP binding by UvrB and probably causes local melting of the DNA helix, facilitating insertion of UvrB beta-hairpin between the DNA strands. Then UvrB probes one DNA strand for the presence of a lesion. If a lesion is found the UvrA subunits dissociate and the UvrB-DNA preincision complex is formed. This complex is subsequently bound by UvrC and the second UvrB is released. If no lesion is found, the DNA wraps around the other UvrB subunit that will check the other stand for damage. This Chlorobium phaeobacteroides (strain DSM 266 / SMG 266 / 2430) protein is UvrABC system protein B.